A 383-amino-acid chain; its full sequence is Putative F-box protein At3g22650 (383 aa).

The region spanning 3-50 is the F-box domain; the sequence is SCERSLLPIDIIEEICCRIPVEYLTQFKLTCKQWFALLKDKRFIYKYL.

In Arabidopsis thaliana (Mouse-ear cress), this protein is Putative F-box protein At3g22650.